Here is a 476-residue protein sequence, read N- to C-terminus: Thyroid receptor-interacting protein 6 (476 aa).

Over residues 1–12 (MSGPTWLPPKQP) the composition is skewed to pro residues. 2 disordered regions span residues 1 to 93 (MSGP…PGSL) and 108 to 253 (NGGR…QPPE). An Asymmetric dimethylarginine; alternate modification is found at R25. At R25 the chain carries Omega-N-methylarginine; alternate. Residue Y55 is modified to Phosphotyrosine; by SRC. S92 carries the phosphoserine modification. Residue R111 is modified to Omega-N-methylarginine. At S142 the chain carries Phosphoserine. The segment covering 152-167 (PTPASYTTASTPAGPA) has biased composition (low complexity). R179 and R186 each carry omega-N-methylarginine. S189 bears the Phosphoserine mark. R205, R236, and R238 each carry omega-N-methylarginine. S249 bears the Phosphoserine mark. 3 consecutive LIM zinc-binding domains span residues 279-316 (CGGCGEDVVGDGAGVVALDRVFHVGCFVCSTCRAQLRG), 339-398 (CATC…FAPR), and 399-467 (CSVC…RIQE). The tract at residues 469–476 (SATVTTDC) is interaction with MAGI1 and PTPN13.

Belongs to the zyxin/ajuba family. Specifically interacts with the ligand binding domain of the thyroid receptor (TR) in the presence of thyroid hormone. Interacts (via the third LIM domain and C-terminus) with PTPN13 (via the second PDZ domain). Interacts (via the second LIM domain or via the third LIM domain plus C-terminus) with PDLIM4 (via PDZ domain). Found in a complex with PTPN13 and PDLIM4. Interacts with SVIL isoform 2. Interacts with LPAR2 but not other LPA receptors. Interacts with PRKAA2. Interacts with MAGI1. Interacts with SCRIB. In case of infection, interacts with S.typhimurium protein sseI. In terms of processing, phosphorylation at Tyr-55 by SRC is required for enhancement of lysophosphatidic acid-induced cell migration. Tyr-55 is dephosphorylated by PTPN13. Abundantly expressed in kidney, liver and lung. Lower levels in heart, placenta and pancreas. Expressed in colonic epithelial cells. Up-regulated in colonic tumors.

The protein localises to the cytoplasm. The protein resides in the cytoskeleton. It localises to the cell junction. Its subcellular location is the focal adhesion. It is found in the nucleus. In terms of biological role, relays signals from the cell surface to the nucleus to weaken adherens junction and promote actin cytoskeleton reorganization and cell invasiveness. Involved in lysophosphatidic acid-induced cell adhesion and migration. Acts as a transcriptional coactivator for NF-kappa-B and JUN, and mediates the transrepression of these transcription factors induced by glucocorticoid receptor. The sequence is that of Thyroid receptor-interacting protein 6 (TRIP6) from Homo sapiens (Human).